We begin with the raw amino-acid sequence, 124 residues long: Fluoride-specific ion channel FluC (124 aa).

Helical transmembrane passes span 4 to 24 (LLLVALGGSIGAVFRYLISIF), 35 to 55 (FGTLLVNVLGSFLMGVIYALG), 60 to 80 (ISPEFKALIGVGLLGALTTFS), and 102 to 122 (VVLNLSLCLFMVYLGQQLVFS). Residues glycine 74 and threonine 77 each contribute to the Na(+) site.

This sequence belongs to the fluoride channel Fluc/FEX (TC 1.A.43) family.

Its subcellular location is the cell inner membrane. The catalysed reaction is fluoride(in) = fluoride(out). Na(+) is not transported, but it plays an essential structural role and its presence is essential for fluoride channel function. Its function is as follows. Fluoride-specific ion channel. Important for reducing fluoride concentration in the cell, thus reducing its toxicity. The chain is Fluoride-specific ion channel FluC from Shewanella oneidensis (strain ATCC 700550 / JCM 31522 / CIP 106686 / LMG 19005 / NCIMB 14063 / MR-1).